A 198-amino-acid chain; its full sequence is Probable GTP-binding protein EngB (198 aa).

Residues 22-195 enclose the EngB-type G domain; it reads DLPEIALAGR…WKAIHKFTKT (174 aa). GTP contacts are provided by residues 30–37, 57–61, 75–78, 142–145, and 174–176; these read GRSNVGKS, GKTQT, DVPG, TKAD, and FSS. S37 and T59 together coordinate Mg(2+).

Belongs to the TRAFAC class TrmE-Era-EngA-EngB-Septin-like GTPase superfamily. EngB GTPase family. It depends on Mg(2+) as a cofactor.

In terms of biological role, necessary for normal cell division and for the maintenance of normal septation. The protein is Probable GTP-binding protein EngB of Bacillus cereus (strain B4264).